A 231-amino-acid chain; its full sequence is LexA repressor (231 aa).

Positions 28 to 48 form a DNA-binding region, H-T-H motif; the sequence is IREIGEALDIRSTNGVNDHLK. Catalysis depends on for autocatalytic cleavage activity residues serine 149 and lysine 186.

Belongs to the peptidase S24 family. In terms of assembly, homodimer.

It catalyses the reaction Hydrolysis of Ala-|-Gly bond in repressor LexA.. Its function is as follows. Represses a number of genes involved in the response to DNA damage (SOS response), including recA and lexA. In the presence of single-stranded DNA, RecA interacts with LexA causing an autocatalytic cleavage which disrupts the DNA-binding part of LexA, leading to derepression of the SOS regulon and eventually DNA repair. The chain is LexA repressor from Anaeromyxobacter sp. (strain Fw109-5).